The following is a 308-amino-acid chain: rRNA 2'-O-methyltransferase fibrillarin 1 (308 aa).

The segment at 1–68 (MRPPVTGGRG…PRGGMKGGSK (68 aa)) is disordered. The segment covering 22 to 35 (GRGFGGGRSFGGGR) has biased composition (gly residues). Residues 42 to 52 (SGPRGRGRGAP) are compositionally biased toward basic residues. Gly residues predominate over residues 53 to 65 (RGRGGPPRGGMKG). Residues 156–157 (TT), 175–176 (EF), 200–201 (DA), and 220–223 (DVAQ) each bind S-adenosyl-L-methionine.

The protein belongs to the methyltransferase superfamily. Fibrillarin family. As to quaternary structure, component of box C/D small nucleolar ribonucleoprotein (snoRNP) particles. Interacts with SKP1A. Expressed in roots, leaves and flowers. Expressed in stems.

The protein resides in the nucleus. Its subcellular location is the nucleolus. The enzyme catalyses a ribonucleotide in rRNA + S-adenosyl-L-methionine = a 2'-O-methylribonucleotide in rRNA + S-adenosyl-L-homocysteine + H(+). It carries out the reaction L-glutaminyl-[histone H2A] + S-adenosyl-L-methionine = N(5)-methyl-L-glutaminyl-[histone H2A] + S-adenosyl-L-homocysteine + H(+). Its function is as follows. S-adenosyl-L-methionine-dependent methyltransferase that has the ability to methylate both RNAs and proteins. Involved in pre-rRNA processing. Utilizes the methyl donor S-adenosyl-L-methionine to catalyze the site-specific 2'-hydroxyl methylation of ribose moieties in pre-ribosomal RNA. Site specificity is provided by a guide RNA that base pairs with the substrate. Methylation occurs at a characteristic distance from the sequence involved in base pairing with the guide RNA. Also acts as a protein methyltransferase by mediating methylation of 'Gln-105' of histone H2A (H2AQ105me), a modification that impairs binding of the FACT complex and is specifically present at 35S ribosomal DNA locus. Binds monophosphate phosphoinositides in vitro. The protein is rRNA 2'-O-methyltransferase fibrillarin 1 of Arabidopsis thaliana (Mouse-ear cress).